The primary structure comprises 485 residues: MNEESNMGGVFKEEEAQSGDVVDFEGDSDTHNPQNWPMGKKVYTTALWALTTCWITFASAIYSAGTAEISEEFHVSYEVANAGTSLLIFGFALGPMLWAPLCEVYGRKWPALAPYFISAAFAFGTATAKDIQTILITRFFAGVFGSSPISITGGSIVDIWTPRQRGTPMVCYGITIAAAPTLGPIIGGAFIASGCGWRWTEYLTGIVMMVQFVLDALWLDESHADVLLTRKASRLRRSTGNFSLHAKWEETSPTFKSLLSTYLVRPFQMLLDPICLLLTIYTSFVYAILYASLESFALEYGRFRRWGPVVSQLPFLSLLIGCLFAAAANIFNNIYYGKKLVANNFKPVPEARLPPMMVGGFAFSAGLFLFGWTSVEHVSSPWPSIIGVFLTGVGFTTIFQSSLQYLVDTFTRYSASAIAANTFVRSMAAGAFPLFVWPMYEKIGIDWGSTIFACISVLLLPAPFLFFKWGYRIRARGEFSKLSTY.

6 helical membrane passes run 42–62 (VYTT…SAIY), 86–106 (LLIF…EVYG), 108–128 (KWPA…TATA), 139–159 (FFAG…IVDI), 172–192 (YGIT…AFIA), and 199–219 (WTEY…ALWL). N-linked (GlcNAc...) asparagine glycosylation is present at Asn241. The next 6 helical transmembrane spans lie at 269 to 289 (MLLD…YAIL), 306 to 326 (WGPV…LFAA), 353 to 373 (LPPM…FGWT), 379 to 399 (SSPW…TTIF), 417 to 437 (AIAA…LFVW), and 447 to 467 (WGST…FLFF).

Belongs to the major facilitator superfamily.

It localises to the membrane. Functionally, efflux pump; part of the gene cluster that mediates the biosynthesis of bikaverin, a red pigment also considered as a mycotoxin. The protein is Efflux pump bik6 of Gibberella fujikuroi (strain CBS 195.34 / IMI 58289 / NRRL A-6831) (Bakanae and foot rot disease fungus).